The primary structure comprises 537 residues: MLKTKQQIIALNRFRCWTSNLPGLQQQCRNQSTVTAASSEWEQAKPLSEMPTISPFQLLRHFLPGGKYTNLDTTQLMLAFRRDFGPIVYFKGSLGKPDVVMTNNPHDFEKALHNQGIWPMRPGMEYLSYHRQVHRKDIFQGVEGLLGSQGEAWGSFRSAVNPVLMQPKNVHLYFNKMSEVNKEFMERIRKIRDPQTLEVPDNFEEEINRWTLESVSVVALDKQLGLITKNRDDPTPKRLFKALTDFFEASGDLEFQPSIWKYIKTPTFKKAIRSLDEITDITKMYVDEAFERIEAENKNRNVEKPENEKSVLEKLVKIDKQIAMVMAMDMLMAGVDTTSSTFTGLLLCLAKNPEKQKKLREEIMQLLPQKDSEFNEAVFKNMPYLRACIKESLRVYPLTVGNARTQANDVVISGYRVPKGTLISMNSVTLIKDDAHYPRASEFLPERWLRASKENEKSAECPHALKASSPFVYLPFGFGSRSCIGRRIAEMELELGIARLIRNFHVEFNYPTDNAFKSLLISVPNIPLKFKFTDVDN.

Cysteine 483 is a binding site for heme.

Belongs to the cytochrome P450 family. Requires heme as cofactor.

This is Cytochrome P450 CYP12A2 (CYP12A2) from Musca domestica (House fly).